A 417-amino-acid polypeptide reads, in one-letter code: Phosphoglycerate kinase 1 (417 aa).

Residue serine 2 is modified to N-acetylserine. 2 positions are modified to phosphoserine: serine 2 and serine 4. Positions 2-186 (SLSNKLTLDK…VGVNLPQKAG (185 aa)) are globular domain-1. Lysine 6 carries the N6-succinyllysine modification. Lysine 11 is subject to N6-acetyllysine. Residues valine 23, aspartate 24, phenylalanine 25, asparagine 26, glutamine 38, and arginine 39 each coordinate (2R)-3-phosphoglycerate. Residues 38–43 (QRIKAA) are mitochondrial targeting region exposed following cis-trans isomerization by PIN1 and recognized by the TOM complex for mitochondrial translocation of the protein. Lysine 48 is modified (N6-acetyllysine; alternate). The residue at position 48 (lysine 48) is an N6-succinyllysine; alternate. (2R)-3-phosphoglycerate is bound by residues serine 62, histidine 63, glycine 65, and arginine 66. Lysine 75 carries the post-translational modification N6-acetyllysine. A Phosphotyrosine modification is found at tyrosine 76. An N6-acetyllysine mark is found at lysine 86 and lysine 91. Residue lysine 97 is modified to N6-acetyllysine; alternate. Lysine 97 carries the N6-(2-hydroxyisobutyryl)lysine; alternate modification. Residues leucine 122 and arginine 123 each contribute to the (2R)-3-phosphoglycerate site. An N6-acetyllysine; alternate modification is found at lysine 131. The residue at position 131 (lysine 131) is an N6-malonyllysine; alternate. Residue lysine 146 is modified to N6-acetyllysine. Histidine 170 and arginine 171 together coordinate (2R)-3-phosphoglycerate. A linker region spans residues 187-190 (GFLM). Position 191 is an N6-succinyllysine (lysine 191). Positions 191–417 (KKELNYFAKA…LPGVDALSNV (227 aa)) are globular domain-2. The residue at position 196 (tyrosine 196) is a Phosphotyrosine. N6-acetyllysine is present on lysine 199. Serine 203 carries the phosphoserine modification. ADP is bound at residue glycine 214. CDP is bound at residue glycine 214. The AMP site is built by alanine 215 and lysine 216. ATP is bound at residue alanine 215. Mg(2+) is bound at residue alanine 215. Lysine 216 is modified (N6-(2-hydroxyisobutyryl)lysine). Mg(2+) contacts are provided by alanine 218 and aspartate 219. Aspartate 219 serves as a coordination point for CDP. Lysine 220 contacts AMP. Position 220 (lysine 220) interacts with ATP. An N6-(2-hydroxyisobutyryl)lysine modification is found at lysine 220. ADP is bound at residue glycine 238. Glycine 238 contacts CDP. An AMP-binding site is contributed by glycine 239. Glycine 239 provides a ligand contact to ATP. Residues lysine 267 and lysine 291 each carry the N6-acetyllysine modification. Glycine 313 provides a ligand contact to AMP. Glycine 313 is a binding site for ATP. Lysine 323 is modified (N6-(2-hydroxyisobutyryl)lysine). The CDP site is built by glycine 338, valine 340, and phenylalanine 343. Phenylalanine 343 lines the ADP pocket. Residue glutamate 344 coordinates AMP. Glutamate 344 contributes to the ATP binding site. Lysine 361 is modified (N6-acetyllysine). ATP-binding residues include aspartate 375 and threonine 376. A Mg(2+)-binding site is contributed by aspartate 375. Residues 406–417 (KVLPGVDALSNV) form an associated with globular domain 1 region.

Belongs to the phosphoglycerate kinase family. Monomer. Interacts with kinase MAPK1/ERK2; the interaction is direct, occurs under hypoxic conditions, and promotes its interaction with PIN1. Interacts with peptidyl-prolyl cis-trans isomerase PIN1; the interaction is direct, occurs under hypoxic conditions, and targets the protein to the mitochondrion by promoting interactions with the TOM complex. Interacts with mitochondrial circRNA mcPGK1 (via its 2nd stem-loop); the interaction is direct and targets the protein to the mitochondrion by promoting interactions with the TOM complex. Interacts with pyruvate dehydrogenase kinase PDK1; the interaction is direct, occurs under hypoxic conditions and leads to PDK1-mediated inhibition of pyruvate dehydrogenase complex activity. Requires Mg(2+) as cofactor. In terms of processing, phosphorylated at Ser-203 by MAPK1/ERK2 under hypoxic conditions, which promotes its mitochondrial targeting.

The protein resides in the cytoplasm. The protein localises to the cytosol. It is found in the mitochondrion matrix. The catalysed reaction is (2R)-3-phosphoglycerate + ATP = (2R)-3-phospho-glyceroyl phosphate + ADP. The enzyme catalyses L-seryl-[protein] + ATP = O-phospho-L-seryl-[protein] + ADP + H(+). It functions in the pathway carbohydrate degradation; glycolysis; pyruvate from D-glyceraldehyde 3-phosphate: step 2/5. In terms of biological role, catalyzes one of the two ATP producing reactions in the glycolytic pathway via the reversible conversion of 1,3-diphosphoglycerate to 3-phosphoglycerate. Both L- and D- forms of purine and pyrimidine nucleotides can be used as substrates, but the activity is much lower on pyrimidines. In addition to its role as a glycolytic enzyme, it seems that PGK-1 acts as a polymerase alpha cofactor protein (primer recognition protein). Acts as a protein kinase when localized to the mitochondrion where it phosphorylates pyruvate dehydrogenase kinase PDK1 to inhibit pyruvate dehydrogenase complex activity and suppress the formation of acetyl-coenzyme A from pyruvate, and consequently inhibit oxidative phosphorylation and promote glycolysis. May play a role in sperm motility. This chain is Phosphoglycerate kinase 1 (PGK1), found in Equus caballus (Horse).